Consider the following 65-residue polypeptide: Large ribosomal subunit protein uL30 (65 aa).

This sequence belongs to the universal ribosomal protein uL30 family. As to quaternary structure, part of the 50S ribosomal subunit.

The chain is Large ribosomal subunit protein uL30 from Desulfosudis oleivorans (strain DSM 6200 / JCM 39069 / Hxd3) (Desulfococcus oleovorans).